Consider the following 174-residue polypeptide: Ribosome maturation factor RimM (174 aa).

The 75-residue stretch at 97–171 folds into the PRC barrel domain; sequence EGYYYDFDII…RMVIDPIPGL (75 aa).

This sequence belongs to the RimM family. As to quaternary structure, binds ribosomal protein uS19.

It localises to the cytoplasm. Its function is as follows. An accessory protein needed during the final step in the assembly of 30S ribosomal subunit, possibly for assembly of the head region. Essential for efficient processing of 16S rRNA. May be needed both before and after RbfA during the maturation of 16S rRNA. It has affinity for free ribosomal 30S subunits but not for 70S ribosomes. The protein is Ribosome maturation factor RimM of Symbiobacterium thermophilum (strain DSM 24528 / JCM 14929 / IAM 14863 / T).